We begin with the raw amino-acid sequence, 201 residues long: Akirin (201 aa).

The segment at 1–133 is disordered; it reads MACATLKRAL…PRRPDSPQNL (133 aa). The Nuclear localization signal motif lies at 20–25; the sequence is PKRRRC. Phosphoserine occurs at positions 39 and 41. Polar residues-rich tracts occupy residues 44-57 and 65-75; these read GPST…TPSN and EPSPFSESSLA. Ser-67 carries the post-translational modification Phosphoserine. A compositionally biased stretch (low complexity) spans 112-122; the sequence is SESSGSEMGPE. Phosphoserine is present on residues Ser-123 and Ser-129.

It belongs to the akirin family. In terms of assembly, interacts with dmap1. Interacts with bap60 and rel; interaction is immune stimulation-dependent; activates selected rel target gene promoters. Interacts with bap55; interaction is immune stimulation-dependent. Interacts with twi. Polyubiquitinated via 'Lys-63'-linked ubiquitin by Hyd, promoting interaction with rel. As to expression, ubiquitous.

The protein resides in the nucleus. In terms of biological role, molecular adapter that acts as a bridge between a variety of multiprotein complexes, and which is required for embryonic development and for normal innate immune response. Acts as a regulator of embryonic myogenesis by bridging Twist (twi) with the SWI/SNF-like Brahma complex, promoting expression of twi-regulated genes during myogenesis. Effector of immune deficiency pathway (Imd) by acting either downstream of, or at the level of, the NF-kappa-B factor Relish (Rel). Acts by bridging the NF-kappa-B factor Rel and the Brahma complex through bap60 interaction, leading to activation a subset of NF-kappa-B factor Relish (Rel) effector genes. Not part of the Toll pathway. Required for the formation of the heart by promoting expression ot tinman (tin). The polypeptide is Akirin (Drosophila melanogaster (Fruit fly)).